Reading from the N-terminus, the 440-residue chain is Translation initiation factor eIF2B subunit gamma (440 aa).

The protein belongs to the eIF-2B gamma/epsilon subunits family. As to quaternary structure, component of the translation initiation factor 2B (eIF2B) complex which is a heterodecamer of two sets of five different subunits: alpha, beta, gamma, delta and epsilon. Subunits alpha, beta and delta comprise a regulatory subcomplex and subunits epsilon and gamma comprise a catalytic subcomplex. Within the complex, the hexameric regulatory complex resides at the center, with the two heterodimeric catalytic subcomplexes bound on opposite sides.

It localises to the cytoplasm. The protein localises to the cytosol. Functionally, acts as a component of the translation initiation factor 2B (eIF2B) complex, which catalyzes the exchange of GDP for GTP on the eukaryotic initiation factor 2 (eIF2) complex gamma subunit. Its guanine nucleotide exchange factor activity is repressed when bound to eIF2 complex phosphorylated on the alpha subunit, thereby limiting the amount of methionyl-initiator methionine tRNA available to the ribosome and consequently global translation is repressed. The chain is Translation initiation factor eIF2B subunit gamma (eif2b3) from Dictyostelium discoideum (Social amoeba).